The following is a 94-amino-acid chain: UPF0298 protein SEQ_1830 (94 aa).

It belongs to the UPF0298 family.

The protein resides in the cytoplasm. This chain is UPF0298 protein SEQ_1830, found in Streptococcus equi subsp. equi (strain 4047).